The chain runs to 315 residues: Replication factor C small subunit (315 aa).

43 to 50 (GSPGVGKT) is a binding site for ATP.

The protein belongs to the activator 1 small subunits family. RfcS subfamily. In terms of assembly, heteromultimer composed of small subunits (RfcS) and large subunits (RfcL).

Functionally, part of the RFC clamp loader complex which loads the PCNA sliding clamp onto DNA. In Methanococcus maripaludis (strain C7 / ATCC BAA-1331), this protein is Replication factor C small subunit.